Here is a 73-residue protein sequence, read N- to C-terminus: UPF0346 protein LVIS_0790 (73 aa).

This sequence belongs to the UPF0346 family.

This chain is UPF0346 protein LVIS_0790, found in Levilactobacillus brevis (strain ATCC 367 / BCRC 12310 / CIP 105137 / JCM 1170 / LMG 11437 / NCIMB 947 / NCTC 947) (Lactobacillus brevis).